A 191-amino-acid chain; its full sequence is Adenylate kinase (191 aa).

Glycine 12–threonine 17 serves as a coordination point for ATP. An NMP region spans residues serine 34–valine 63. AMP-binding positions include threonine 35, arginine 40, glutamate 61–valine 63, glycine 88–arginine 91, and glutamine 95. The LID stretch occupies residues glycine 130–aspartate 136. Residue arginine 131 participates in ATP binding. AMP-binding residues include arginine 133 and arginine 145. Arginine 173 lines the ATP pocket.

The protein belongs to the adenylate kinase family. Monomer.

The protein localises to the cytoplasm. The enzyme catalyses AMP + ATP = 2 ADP. Its pathway is purine metabolism; AMP biosynthesis via salvage pathway; AMP from ADP: step 1/1. In terms of biological role, catalyzes the reversible transfer of the terminal phosphate group between ATP and AMP. Plays an important role in cellular energy homeostasis and in adenine nucleotide metabolism. In Helicobacter pylori (strain ATCC 700392 / 26695) (Campylobacter pylori), this protein is Adenylate kinase.